The primary structure comprises 270 residues: Phospholysine phosphohistidine inorganic pyrophosphate phosphatase (270 aa).

Mg(2+) contacts are provided by aspartate 19 and cysteine 21. Residues 19 to 21 (DMC), 56 to 57 (TN), and lysine 191 contribute to the substrate site. Aspartate 216 serves as a coordination point for Mg(2+).

It belongs to the HAD-like hydrolase superfamily. Mg(2+) serves as cofactor.

It is found in the cytoplasm. The protein resides in the nucleus. The catalysed reaction is diphosphate + H2O = 2 phosphate + H(+). Its function is as follows. Phosphatase that hydrolyzes imidodiphosphate, 3-phosphohistidine and 6-phospholysine. Has broad substrate specificity and can also hydrolyze inorganic diphosphate, but with lower efficiency. In Danio rerio (Zebrafish), this protein is Phospholysine phosphohistidine inorganic pyrophosphate phosphatase (lhpp).